Here is a 487-residue protein sequence, read N- to C-terminus: MNASEFRRRGKEMVDYVADYLEGIEGRQVFPDVDPGYLRPLIPTTAPQEPETFEAIIEDIEKIIMPGVTHWHSPYFFAYFPTASSYPAMLADMLCGAIGCIGFSWAASPACTELETVMMDWLGKMLQLPEAFLAGEAGEGGGVIQGTASEATLVALLAARTKVTRHLQAASPELMQAAIMEKLVAYASDQAHSSVEKAGLIGGVRLKAIPSDGKFAMRASALQEALERDKAAGLIPFFVVATLGTTSCCSFDNLLEVGPICHEEGLWLHVDAAYAGSAFICPEFRHLLNGVEFADSFNFNPHKWLLVNFDCSAMWVKKRTDLTGAFRLDPVYLRHSHQDSGLITDYRHWQLPLGRRFRSLKMWFVFRMYGVKGLQAYIRKHVQLSHAFEALVRQDTRFEICAEVILGLVCFRLKGSNKLNEALLESINSAKKIHLVPCSLRDRFVLRFAICSRTVELAHVQLAWEHIQEMAATVLRAQGEEKAEIKN.

At methionine 1 the chain carries N-acetylmethionine. 2 tandem repeats follow at residues glutamate 58–glutamate 115 and methionine 118–alanine 178. The segment at glutamate 58–alanine 178 is 2 X approximate tandem repeats. Threonine 82 is a binding site for substrate. Pyridoxal 5'-phosphate is bound by residues alanine 148 and serine 149. Substrate is bound at residue histidine 192. Positions 246 and 300 each coordinate pyridoxal 5'-phosphate. Lysine 303 carries the post-translational modification N6-(pyridoxal phosphate)lysine.

It belongs to the group II decarboxylase family. Homodimer. The cofactor is pyridoxal 5'-phosphate.

It carries out the reaction L-dopa + H(+) = dopamine + CO2. The enzyme catalyses 5-hydroxy-L-tryptophan + H(+) = serotonin + CO2. The protein operates within catecholamine biosynthesis; dopamine biosynthesis; dopamine from L-tyrosine: step 2/2. Functionally, catalyzes the decarboxylation of L-3,4-dihydroxyphenylalanine (DOPA) to dopamine and L-5-hydroxytryptophan to serotonin. The polypeptide is Aromatic-L-amino-acid decarboxylase (DDC) (Bos taurus (Bovine)).